The chain runs to 250 residues: tRNA (guanine-N(1)-)-methyltransferase (250 aa).

S-adenosyl-L-methionine contacts are provided by residues Gly114 and 134-139 (IGDYVL).

The protein belongs to the RNA methyltransferase TrmD family. In terms of assembly, homodimer.

It localises to the cytoplasm. The catalysed reaction is guanosine(37) in tRNA + S-adenosyl-L-methionine = N(1)-methylguanosine(37) in tRNA + S-adenosyl-L-homocysteine + H(+). Specifically methylates guanosine-37 in various tRNAs. This chain is tRNA (guanine-N(1)-)-methyltransferase, found in Moorella thermoacetica (strain ATCC 39073 / JCM 9320).